A 462-amino-acid polypeptide reads, in one-letter code: Glutamate-1-semialdehyde 2,1-aminomutase (462 aa).

The interval 178–200 is disordered; that stretch reads DDPQRPASPRSQSSRGLPSSPGV. Positions 182–192 are enriched in low complexity; sequence RPASPRSQSSR. N6-(pyridoxal phosphate)lysine is present on lysine 297.

Belongs to the class-III pyridoxal-phosphate-dependent aminotransferase family. HemL subfamily. As to quaternary structure, homodimer. The cofactor is pyridoxal 5'-phosphate.

It is found in the cytoplasm. The catalysed reaction is (S)-4-amino-5-oxopentanoate = 5-aminolevulinate. It functions in the pathway porphyrin-containing compound metabolism; protoporphyrin-IX biosynthesis; 5-aminolevulinate from L-glutamyl-tRNA(Glu): step 2/2. The protein is Glutamate-1-semialdehyde 2,1-aminomutase (hemL) of Mycobacterium bovis (strain ATCC BAA-935 / AF2122/97).